The following is a 544-amino-acid chain: Tyrosyl-DNA phosphodiesterase 1 (544 aa).

His182 serves as the catalytic Nucleophile. Lys184 lines the substrate pocket. The interaction with DNA stretch occupies residues 312–316; it reads SIGTS. His432 acts as the Proton donor/acceptor in catalysis. Substrate is bound at residue Lys434.

Belongs to the tyrosyl-DNA phosphodiesterase family.

Its subcellular location is the nucleus. Its function is as follows. DNA repair enzyme that can remove a variety of covalent adducts from DNA through hydrolysis of a 3'-phosphodiester bond, giving rise to DNA with a free 3' phosphate. Catalyzes the hydrolysis of dead-end complexes between DNA and the topoisomerase I active site tyrosine residue. Hydrolyzes 3'-phosphoglycolates on protruding 3' ends on DNA double-strand breaks due to DNA damage by radiation and free radicals. Also cleaves 5' phosphotyrosyl adducts resulting from dead-end complexes between DNA and the active site tyrosine of topoisomerase II. Contributes to DNA repair after radiation damage. Acts on blunt-ended double-strand DNA breaks and on single-stranded DNA. May have low 3'exonuclease activity and may be able to remove a single nucleoside from the 3'end of DNA and RNA molecules with 3'hydroxyl groups. Has no exonuclease activity towards DNA or RNA with a 3'phosphate. This is Tyrosyl-DNA phosphodiesterase 1 (TDP1) from Saccharomyces cerevisiae (strain ATCC 204508 / S288c) (Baker's yeast).